The following is a 1166-amino-acid chain: IQ domain-containing protein N (1166 aa).

The segment covering 1–19 has biased composition (polar residues); it reads MQPATQLQFTNHLSPNGQC. The interval 1-56 is disordered; that stretch reads MQPATQLQFTNHLSPNGQCILQPPPTPSLPDKMEKAPPQPQHEGLKSEEHLPQQPA. The IQ 1 domain occupies 89–118; it reads HARAATLIQANWRGYRLRQKLISQMTAAKA. Disordered regions lie at residues 431–450, 769–797, and 829–848; these read VCPG…VATP, LSAP…TTQG, and DSGA…PCQE. 5 IQ domains span residues 907 to 932, 928 to 955, 952 to 979, 1091 to 1119, and 1114 to 1143; these read AVTT…RRAT, HRRA…RATT, RATT…MLHP, RDKA…MAAK, and QQMA…LLGP. The disordered stretch occupies residues 1145–1166; sequence DPWSSSQHMHWASSQHTHWPGI. Polar residues predominate over residues 1147 to 1166; the sequence is WSSSQHMHWASSQHTHWPGI.

In terms of assembly, interacts with calmodulin.

Its function is as follows. Essential for spermiogenesis and fertilization. May be required for manchette assembly in elongating spermatids. This chain is IQ domain-containing protein N (IQCN), found in Macaca fascicularis (Crab-eating macaque).